Here is a 182-residue protein sequence, read N- to C-terminus: UPF0149 protein HI_0817 (182 aa).

The protein belongs to the UPF0149 family.

This is UPF0149 protein HI_0817 from Haemophilus influenzae (strain ATCC 51907 / DSM 11121 / KW20 / Rd).